We begin with the raw amino-acid sequence, 40 residues long: Natriuretic peptide PpNP-a (40 aa).

Positions 1-8 are excised as a propeptide; the sequence is SGSKTANI. Positions 1–40 are disordered; the sequence is SGSKTANIGDGCFGVPIDHIGSTSGMGCGSPRPKPTPGGS. A disulfide bridge connects residues cysteine 12 and cysteine 28.

The protein belongs to the natriuretic peptide family. Expressed by the venom gland.

The protein resides in the secreted. Functionally, snake venom natriuretic peptide that targets both NPR1 and NPR2. Exhibits hypotensive and vasodepressor activities. This chain is Natriuretic peptide PpNP-a, found in Pseudechis porphyriacus (Red-bellied black snake).